Reading from the N-terminus, the 681-residue chain is UvrABC system protein C (681 aa).

The tract at residues 1–23 (MNGKKLPDGGILFDETDDEDDDA) is disordered. A compositionally biased stretch (acidic residues) spans 14 to 23 (DETDDEDDDA). Residues 67–145 (NSPGVYRMFN…IKRLRPRFNV (79 aa)) enclose the GIY-YIG domain. The UVR domain maps to 255-290 (QAVKTAIARQMNEASEDLDFERAAIYRDRLAALSHV).

The protein belongs to the UvrC family. In terms of assembly, interacts with UvrB in an incision complex.

It localises to the cytoplasm. Its function is as follows. The UvrABC repair system catalyzes the recognition and processing of DNA lesions. UvrC both incises the 5' and 3' sides of the lesion. The N-terminal half is responsible for the 3' incision and the C-terminal half is responsible for the 5' incision. The chain is UvrABC system protein C from Agrobacterium fabrum (strain C58 / ATCC 33970) (Agrobacterium tumefaciens (strain C58)).